The sequence spans 282 residues: DNA-directed RNA polymerase III subunit RPC5 (282 aa).

The interval 1 to 70 is disordered; that stretch reads MSIDNKLFVT…TGEEEEDDPV (70 aa). Acidic residues-rich tracts occupy residues 10-35 and 60-70; these read TEED…DMIA and DTGEEEEDDPV. At Thr61 the chain carries Phosphothreonine.

In terms of assembly, component of the RNA polymerase III (Pol III) complex consisting of 17 subunits. Interacts with RPC53/RPC4. RPC53/RPC4, RPC37/RPC5 and RPC11/RPC10 probably form a Pol III subcomplex.

The protein localises to the nucleus. Functionally, DNA-dependent RNA polymerase catalyzes the transcription of DNA into RNA using the four ribonucleoside triphosphates as substrates. Specific peripheric component of RNA polymerase III which synthesizes small RNAs, such as 5S rRNA and tRNAs. The RPC53/RPC4-RPC37/RPC5 subcomplex is required for terminator recognition and reinitiation. This is DNA-directed RNA polymerase III subunit RPC5 (RPC37) from Saccharomyces cerevisiae (strain ATCC 204508 / S288c) (Baker's yeast).